Consider the following 442-residue polypeptide: Serine--tRNA ligase (442 aa).

Threonine 244 to glutamate 246 contacts L-serine. An ATP-binding site is contributed by arginine 275–glutamate 277. An L-serine-binding site is contributed by glutamate 298. Glutamate 365 to serine 368 provides a ligand contact to ATP. L-serine is bound at residue serine 400.

The protein belongs to the class-II aminoacyl-tRNA synthetase family. Type-1 seryl-tRNA synthetase subfamily. In terms of assembly, homodimer. The tRNA molecule binds across the dimer.

Its subcellular location is the cytoplasm. It catalyses the reaction tRNA(Ser) + L-serine + ATP = L-seryl-tRNA(Ser) + AMP + diphosphate + H(+). The enzyme catalyses tRNA(Sec) + L-serine + ATP = L-seryl-tRNA(Sec) + AMP + diphosphate + H(+). The protein operates within aminoacyl-tRNA biosynthesis; selenocysteinyl-tRNA(Sec) biosynthesis; L-seryl-tRNA(Sec) from L-serine and tRNA(Sec): step 1/1. In terms of biological role, catalyzes the attachment of serine to tRNA(Ser). Is also able to aminoacylate tRNA(Sec) with serine, to form the misacylated tRNA L-seryl-tRNA(Sec), which will be further converted into selenocysteinyl-tRNA(Sec). This is Serine--tRNA ligase from Bradyrhizobium sp. (strain BTAi1 / ATCC BAA-1182).